Consider the following 304-residue polypeptide: Ribosomal RNA small subunit methyltransferase H (304 aa).

Residues 47 to 49 (GGH), aspartate 66, phenylalanine 93, aspartate 108, and glutamine 115 each bind S-adenosyl-L-methionine.

This sequence belongs to the methyltransferase superfamily. RsmH family.

The protein resides in the cytoplasm. It catalyses the reaction cytidine(1402) in 16S rRNA + S-adenosyl-L-methionine = N(4)-methylcytidine(1402) in 16S rRNA + S-adenosyl-L-homocysteine + H(+). Specifically methylates the N4 position of cytidine in position 1402 (C1402) of 16S rRNA. The protein is Ribosomal RNA small subunit methyltransferase H of Prochlorococcus marinus (strain NATL1A).